The chain runs to 704 residues: Polyribonucleotide nucleotidyltransferase (704 aa).

D485 and D491 together coordinate Mg(2+). In terms of domain architecture, KH spans 552–611; sequence PKILTMTINPDKIRDVIGPSGKMINKIIEDTGVKIDIEQDGTIYISSADTNMNNKAREII. The S1 motif domain occupies 621-689; the sequence is GQMYLGTVKR…NQGRVNLSRK (69 aa).

It belongs to the polyribonucleotide nucleotidyltransferase family. Mg(2+) serves as cofactor.

Its subcellular location is the cytoplasm. It carries out the reaction RNA(n+1) + phosphate = RNA(n) + a ribonucleoside 5'-diphosphate. In terms of biological role, involved in mRNA degradation. Catalyzes the phosphorolysis of single-stranded polyribonucleotides processively in the 3'- to 5'-direction. In Halalkalibacterium halodurans (strain ATCC BAA-125 / DSM 18197 / FERM 7344 / JCM 9153 / C-125) (Bacillus halodurans), this protein is Polyribonucleotide nucleotidyltransferase.